Reading from the N-terminus, the 150-residue chain is Transcriptional repressor NrdR (150 aa).

The segment at 3 to 34 (CPFCGYEDTFVIDTREIEDQRVIRRRRECPNC) is a zinc-finger region. The region spanning 49-139 (IMVIKKDGRR…VYQEFSSLEE (91 aa)) is the ATP-cone domain.

Belongs to the NrdR family. Zn(2+) is required as a cofactor.

Functionally, negatively regulates transcription of bacterial ribonucleotide reductase nrd genes and operons by binding to NrdR-boxes. This chain is Transcriptional repressor NrdR, found in Dictyoglomus thermophilum (strain ATCC 35947 / DSM 3960 / H-6-12).